Here is a 499-residue protein sequence, read N- to C-terminus: Protein SENSITIVE TO PROTON RHIZOTOXICITY 1 (499 aa).

Positions 1-31 are disordered; sequence METEDDLCNTNWGSSSSKSREPGSSDCGNST. The segment at 244–266 adopts a C2H2-type 1 zinc-finger fold; it reads HFCTICGKGFKRDANLRMHMRGH. Residues 354–385 form a C2H2-type 2; atypical zinc finger; that stretch reads KHCGKNKWLCSCGTTFSRKDKLFGHIALFQGH. The interval 390–436 is disordered; the sequence is PLEETKPSASTSTQRGSSEGGNNNQGMVGFNLGSASNANQETTQPGM. 2 stretches are compositionally biased toward polar residues: residues 396–415 and 422–435; these read PSAS…NNQG and GSAS…TQPG.

Expressed in roots (e.g. root tips and lateral roots), leaves, flowers (e.g. stigma, sepal, anther, and filament), stems, siliques and cotyledons.

The protein localises to the nucleus. In terms of biological role, probable transcription factor. Together with STOP2, plays a critical role in tolerance to major stress factors in acid soils such as proton H(+) and aluminum ion Al(3+). Required for the expression of genes in response to acidic stress (e.g. ALMT1 and MATE), and Al-activated citrate exudation. The protein is Protein SENSITIVE TO PROTON RHIZOTOXICITY 1 of Arabidopsis thaliana (Mouse-ear cress).